Consider the following 578-residue polypeptide: Zinc finger protein with KRAB and SCAN domains 8 (578 aa).

Residues 1-20 (MAEESRKPSAPSPPDQTPEE) are disordered. Ser-12 carries the post-translational modification Phosphoserine. Lys-26 is covalently cross-linked (Glycyl lysine isopeptide (Lys-Gly) (interchain with G-Cter in SUMO2)). Residues 51–133 (RLRFRQLCYQ…TLLEDLERQI (83 aa)) enclose the SCAN box domain. The segment at 158–205 (ASAPEPPNTQLQSEATQHKSPVPQESQERAMSTSQSPTRSQKGSSGDQ) is disordered. The span at 165–205 (NTQLQSEATQHKSPVPQESQERAMSTSQSPTRSQKGSSGDQ) shows a compositional bias: polar residues. Residues Lys-176 and Lys-199 each participate in a glycyl lysine isopeptide (Lys-Gly) (interchain with G-Cter in SUMO2) cross-link. Ser-201 is modified (phosphoserine). The region spanning 220 to 316 (EKIEDMAVSL…GRLERQRGNP (97 aa)) is the KRAB domain. Residues Lys-221, Lys-272, and Lys-288 each participate in a glycyl lysine isopeptide (Lys-Gly) (interchain with G-Cter in SUMO2) cross-link. 2 C2H2-type zinc fingers span residues 322-344 (HKCD…WRIH) and 350-372 (YQCN…QDIH). Glycyl lysine isopeptide (Lys-Gly) (interchain with G-Cter in SUMO2) cross-links involve residues Lys-374 and Lys-376. C2H2-type zinc fingers lie at residues 378-400 (YHCK…QRIH), 406-428 (YQCN…QRIH), 434-456 (YECN…QRIH), 462-484 (YECD…QRSH), 490-512 (YKCN…QRIH), 518-540 (YKCK…LRIH), and 546-568 (YQCN…QRIH). Residues Lys-413 and Lys-441 each participate in a glycyl lysine isopeptide (Lys-Gly) (interchain with G-Cter in SUMO2) cross-link. Lys-502 participates in a covalent cross-link: Glycyl lysine isopeptide (Lys-Gly) (interchain with G-Cter in SUMO2). Lys-572 participates in a covalent cross-link: Glycyl lysine isopeptide (Lys-Gly) (interchain with G-Cter in SUMO2).

It belongs to the krueppel C2H2-type zinc-finger protein family.

It localises to the nucleus. In terms of biological role, may be involved in transcriptional regulation. This is Zinc finger protein with KRAB and SCAN domains 8 (ZKSCAN8) from Pan troglodytes (Chimpanzee).